Consider the following 504-residue polypeptide: ATP synthase subunit alpha, chloroplastic (504 aa).

Residue 170-177 (GDRQTGKT) coordinates ATP.

It belongs to the ATPase alpha/beta chains family. F-type ATPases have 2 components, CF(1) - the catalytic core - and CF(0) - the membrane proton channel. CF(1) has five subunits: alpha(3), beta(3), gamma(1), delta(1), epsilon(1). CF(0) has four main subunits: a, b, b' and c.

The protein localises to the plastid. Its subcellular location is the chloroplast thylakoid membrane. The enzyme catalyses ATP + H2O + 4 H(+)(in) = ADP + phosphate + 5 H(+)(out). Functionally, produces ATP from ADP in the presence of a proton gradient across the membrane. The alpha chain is a regulatory subunit. The protein is ATP synthase subunit alpha, chloroplastic of Hordeum vulgare (Barley).